We begin with the raw amino-acid sequence, 164 residues long: Transcription antitermination protein NusB (164 aa).

It belongs to the NusB family.

In terms of biological role, involved in transcription antitermination. Required for transcription of ribosomal RNA (rRNA) genes. Binds specifically to the boxA antiterminator sequence of the ribosomal RNA (rrn) operons. This is Transcription antitermination protein NusB from Chlorobaculum parvum (strain DSM 263 / NCIMB 8327) (Chlorobium vibrioforme subsp. thiosulfatophilum).